The chain runs to 511 residues: MALRAMRGIVNGAAPELPVPTGGPMAGAREQALAVSRNYLSQPRLTYKTVSGVNGPLVILDHVKFPRYAEIVHLTLPDGTKRSGQVLEVSGSKAVVQVFEGTSGIDAKKTSCEFTGDILRTPVSEDMLGRVFNGSGKPIDRGPVVLAEDFLDIMGQPINPQCRIYPEEMIQTGISAIDGMNSIARGQKIPIFSAAGLPHNEIAAQICRQAGLVKKSKDVVDYSEENFAIVFAAMGVNMETARFFKSDFEENGSMDNVCLFLNLANDPTIERIITPRLALTTAEFLAYQCEKHVLVILTDMSSYAEALREVSAAREEVPGRRGFPGYMYTDLATIYERAGRVEGRNGSITQIPILTMPNDDITHPIPDLTGYITEGQIYVDRQLHNRQIYPPINVLPSLSRLMKSAIGEGMTRKDHADVSNQLYACYAIGKDVQAMKAVVGEEALTSDDLLYLEFLQKFEKNFITQGPYENRTVYETLDIGWQLLRIFPKEMLKRIPQSTLSEFYPRDSAKH.

Arg-400 is an ATP binding site.

It belongs to the ATPase alpha/beta chains family. As to quaternary structure, V-ATPase is a heteromultimeric enzyme made up of two complexes: the ATP-hydrolytic V1 complex and the proton translocation V0 complex. The V1 complex consists of three catalytic AB heterodimers that form a heterohexamer, three peripheral stalks each consisting of EG heterodimers, one central rotor including subunits D and F, and the regulatory subunits C and H. The proton translocation complex V0 consists of the proton transport subunit a, a ring of proteolipid subunits c9c'', rotary subunit d, subunits e and f, and the accessory subunits ATP6AP1/Ac45 and ATP6AP2/PRR. In terms of tissue distribution, kidney; found in early distal nephron, encompassing thick ascending limbs and distal convoluted tubules and in the alpha-intercalated cells of the cortical collecting ducts (at protein level). Expressed in epididymal clear cells (at protein level). Mainly expressed in the organ of Corti and spiral ganglion neurons, in both the early postnatal cochlea (P2) and the adult cochlea (P30).

It localises to the apical cell membrane. The protein localises to the melanosome. It is found in the cytoplasm. The protein resides in the cytoplasmic vesicle. Its subcellular location is the secretory vesicle. It localises to the synaptic vesicle membrane. The protein localises to the clathrin-coated vesicle membrane. In terms of biological role, non-catalytic subunit of the V1 complex of vacuolar(H+)-ATPase (V-ATPase), a multisubunit enzyme composed of a peripheral complex (V1) that hydrolyzes ATP and a membrane integral complex (V0) that translocates protons. V-ATPase is responsible for acidifying and maintaining the pH of intracellular compartments and in some cell types, is targeted to the plasma membrane, where it is responsible for acidifying the extracellular environment. In renal intercalated cells, can partially compensate the lack of ATP6V1B1 and mediate secretion of protons (H+) into the urine under base-line conditions but not in conditions of acid load. The polypeptide is V-type proton ATPase subunit B, brain isoform (Atp6v1b2) (Mus musculus (Mouse)).